Reading from the N-terminus, the 260-residue chain is Small ribosomal subunit protein uS2 (260 aa).

Belongs to the universal ribosomal protein uS2 family.

This chain is Small ribosomal subunit protein uS2, found in Streptococcus gordonii (strain Challis / ATCC 35105 / BCRC 15272 / CH1 / DL1 / V288).